Consider the following 345-residue polypeptide: L-rhamnose-proton symporter (345 aa).

Transmembrane regions (helical) follow at residues 4 to 24, 38 to 58, 68 to 88, 101 to 121, 131 to 151, 175 to 195, 214 to 234, 259 to 279, 290 to 310, and 323 to 343; these read AITM…CFYA, WSVG…ALLL, FSAA…IGNI, MGIG…TPLL, TAGG…VAIV, LVLA…MDAA, LPSY…FCFI, VLLS…YAWG, ISWM…GLLL, and VLSL…LGMA.

It belongs to the L-rhamnose transporter (TC 2.A.7.6) family.

It is found in the cell inner membrane. It carries out the reaction L-rhamnopyranose(in) + H(+)(in) = L-rhamnopyranose(out) + H(+)(out). Its function is as follows. Uptake of L-rhamnose across the cytoplasmic membrane with the concomitant transport of protons into the cell (symport system). In Cronobacter sakazakii (strain ATCC BAA-894) (Enterobacter sakazakii), this protein is L-rhamnose-proton symporter.